The sequence spans 85 residues: Small ribosomal subunit protein bS20 (85 aa).

The segment at methionine 1–isoleucine 24 is disordered.

Belongs to the bacterial ribosomal protein bS20 family.

Functionally, binds directly to 16S ribosomal RNA. The sequence is that of Small ribosomal subunit protein bS20 from Bacillus mycoides (strain KBAB4) (Bacillus weihenstephanensis).